A 401-amino-acid chain; its full sequence is 3-sulfinopropanoyl-CoA desulfinase (401 aa).

Residues 121-124 (ICIS), S130, and 153-156 (YWIT) each bind FAD. 243–244 (YN) provides a ligand contact to substrate. FAD-binding positions include R272, Q339, S343, 366–370 (GGTAQ), and Q387.

It belongs to the acyl-CoA dehydrogenase family. As to quaternary structure, homotetramer. FAD serves as cofactor.

The enzyme catalyses 3-sulfinopropanoyl-CoA + H2O = propanoyl-CoA + sulfite + H(+). In terms of biological role, catalyzes the conversion 3-sulfinopropanoyl-CoA (3SP-CoA) to propanoyl-CoA by abstraction of sulfite. Does not show dehydrogenase activity. Involved in the degradation of 3,3'-dithiodipropionate (DTDP), a sulfur-containing precursor substrate for biosynthesis of polythioesters (PTEs). The protein is 3-sulfinopropanoyl-CoA desulfinase of Advenella mimigardefordensis (strain DSM 17166 / LMG 22922 / DPN7).